A 784-amino-acid chain; its full sequence is MNQMNVTGMNPGAGGPVGGVPMMNNGSTAPRNDGNVNNIPETMINNLNTYIYDYFLKRGYHECARALVKDESIKLNTEPPTKTSPGHRREDMNGVEGDAIMTDSKDGDKIKIPDDLPRPNLASESQQSSFLLDWFSLFWDFFWAQRKKGNSNDVRQYLQHTQNMMRLREQQHNQLLRQQPVMPRQMGPLNMRRNGMVPANLQKTVLQNNTGGLSQQQIAQLQKNQQMHMMQQMQREHSDMDMNGHRPQSPSSAENAPSPSKRPRLENGPMNGQQLAPNGRGQGQAMPGQPNSQALLMQNGLNPRAMNPAQFAGFQQQGPAAQQKSIQVYAQNLALHHSRSALNNQGIPNGLMNPGVMPNQTDLVPMPDGQGMYPMNGDYYGTNGQMAQVRAGMQTPGGQHGNHALQDYQMQLMLLEQQNKRRLMMARQEQDSMSRADGQPPMPGQQGLPPGTSPQGSRAGTSPNPNEQMKRGTPKMPQTGLPGSPNAADAMGQNRGSPAAMNFNGGQMPPDMAGGQFFMKGMPDAMGGPNGMRPPSSNPAFSGPQMGQPIPAGAVNRVPSGNWQQQQGQPMGPQQSPAQQPQSTGTPQTQNSMPPPQAPPAGANAARTSPQSQNAAPPTPQQANKPAPKKREPKDTARKRTTKKQPAAAAAAANTAATPSSEAEHPPTTPTPSTPITPQHPSSFNKAGPNPTTSAPQQPTSAPAPQPIVQQPPPDQTQQSFNDLSIPDASAFNLDFSALENPDILENFDFDTFLNTDADTAGFGFDPNISYPTDGVETGAGDGL.

A LisH domain is found at 43 to 75 (MINNLNTYIYDYFLKRGYHECARALVKDESIKL). Polar residues predominate over residues 75-84 (LNTEPPTKTS). Disordered regions lie at residues 75-122 (LNTE…PNLA), 212-295 (GLSQ…SQAL), 424-726 (MMAR…DLSI), and 764-784 (GFDP…GDGL). The segment covering 103 to 117 (DSKDGDKIKIPDDLP) has biased composition (basic and acidic residues). Low complexity predominate over residues 215 to 233 (QQQIAQLQKNQQMHMMQQM). Basic and acidic residues predominate over residues 234–244 (QREHSDMDMNG). The span at 247-259 (PQSPSSAENAPSP) shows a compositional bias: low complexity. Residues 453–467 (SPQGSRAGTSPNPNE) show a composition bias toward polar residues. Residues 564 to 592 (QQQQGQPMGPQQSPAQQPQSTGTPQTQNS) are compositionally biased toward low complexity. Residues 607–624 (RTSPQSQNAAPPTPQQAN) are compositionally biased toward polar residues. Basic and acidic residues predominate over residues 629-638 (KKREPKDTAR). Low complexity-rich tracts occupy residues 644–661 (KQPA…TPSS) and 691–701 (PTTSAPQQPTS). Residues 702-715 (APAPQPIVQQPPPD) are compositionally biased toward pro residues.

The protein belongs to the FLO8 family. As to quaternary structure, interacts with ptaB.

The protein localises to the nucleus. Its function is as follows. Transcription factor that controls the expression of genes related to the process of conidiation and adherence and regulates biofilm formation. Controls conidiation and adhesion primarily by affecting the expression of the three regulatory genes flbB, stuA and medA. Required for virulence in an egg and a mouse infection model. This chain is Transcriptional activator somA, found in Aspergillus fumigatus (strain ATCC MYA-4609 / CBS 101355 / FGSC A1100 / Af293) (Neosartorya fumigata).